The chain runs to 292 residues: NAD kinase (292 aa).

Catalysis depends on D72, which acts as the Proton acceptor. Residues D72 to G73, N146 to E147, H157, R174, D176, and T187 to S192 contribute to the NAD(+) site.

It belongs to the NAD kinase family. Requires a divalent metal cation as cofactor.

It is found in the cytoplasm. It carries out the reaction NAD(+) + ATP = ADP + NADP(+) + H(+). Functionally, involved in the regulation of the intracellular balance of NAD and NADP, and is a key enzyme in the biosynthesis of NADP. Catalyzes specifically the phosphorylation on 2'-hydroxyl of the adenosine moiety of NAD to yield NADP. This Shewanella loihica (strain ATCC BAA-1088 / PV-4) protein is NAD kinase.